The sequence spans 102 residues: Small ribosomal subunit protein uS10 (102 aa).

Belongs to the universal ribosomal protein uS10 family. In terms of assembly, part of the 30S ribosomal subunit.

Functionally, involved in the binding of tRNA to the ribosomes. The sequence is that of Small ribosomal subunit protein uS10 from Methylobacterium radiotolerans (strain ATCC 27329 / DSM 1819 / JCM 2831 / NBRC 15690 / NCIMB 10815 / 0-1).